Reading from the N-terminus, the 651-residue chain is Probable endo-1,3(4)-beta-glucanase NFIA_089530 (651 aa).

Positions Met1–Ala21 are cleaved as a signal peptide. One can recognise a GH16 domain in the interval Glu36–Thr289. The N-linked (GlcNAc...) asparagine glycan is linked to Asn64. Glu145 (nucleophile) is an active-site residue. Glu150 (proton donor) is an active-site residue. Asn200 carries N-linked (GlcNAc...) asparagine glycosylation. Residues Pro364–Thr378 show a composition bias toward low complexity. 2 disordered regions span residues Pro364–Ser422 and Ser508–Ala557. Composition is skewed to polar residues over residues Asn379 to Pro400 and Gln520 to Gly535. The span at Ser542–Ala557 shows a compositional bias: low complexity. Asn629 is lipidated: GPI-anchor amidated asparagine. Positions Gly630 to Ala651 are cleaved as a propeptide — removed in mature form.

The protein belongs to the glycosyl hydrolase 16 family.

It localises to the cell membrane. The catalysed reaction is Endohydrolysis of (1-&gt;3)- or (1-&gt;4)-linkages in beta-D-glucans when the glucose residue whose reducing group is involved in the linkage to be hydrolyzed is itself substituted at C-3.. Functionally, mixed-linked glucanase involved in the degradation of complex natural cellulosic substrates. This chain is Probable endo-1,3(4)-beta-glucanase NFIA_089530, found in Neosartorya fischeri (strain ATCC 1020 / DSM 3700 / CBS 544.65 / FGSC A1164 / JCM 1740 / NRRL 181 / WB 181) (Aspergillus fischerianus).